Reading from the N-terminus, the 137-residue chain is Large ribosomal subunit protein uL16 (137 aa).

Residues 1-20 (MLQPSNRKYRKDFKGRNRGV) are disordered. Residues 7-17 (RKYRKDFKGRN) show a composition bias toward basic residues.

Belongs to the universal ribosomal protein uL16 family. In terms of assembly, part of the 50S ribosomal subunit.

Functionally, binds 23S rRNA and is also seen to make contacts with the A and possibly P site tRNAs. The polypeptide is Large ribosomal subunit protein uL16 (Coxiella burnetii (strain CbuK_Q154) (Coxiella burnetii (strain Q154))).